Consider the following 441-residue polypeptide: tRNA modification GTPase MnmE (441 aa).

R24, E81, and K121 together coordinate (6S)-5-formyl-5,6,7,8-tetrahydrofolate. A TrmE-type G domain is found at 218-366 (GMVVAIAGPP…LLRELTRFAA (149 aa)). GTP is bound by residues 228-233 (NVGKST), 247-253 (SPHAGTT), and 272-275 (DTAG). Mg(2+)-binding residues include S232 and T253. K441 is a binding site for (6S)-5-formyl-5,6,7,8-tetrahydrofolate.

It belongs to the TRAFAC class TrmE-Era-EngA-EngB-Septin-like GTPase superfamily. TrmE GTPase family. Homodimer. Heterotetramer of two MnmE and two MnmG subunits. K(+) is required as a cofactor.

The protein resides in the cytoplasm. Exhibits a very high intrinsic GTPase hydrolysis rate. Involved in the addition of a carboxymethylaminomethyl (cmnm) group at the wobble position (U34) of certain tRNAs, forming tRNA-cmnm(5)s(2)U34. The sequence is that of tRNA modification GTPase MnmE from Rhodopseudomonas palustris (strain ATCC BAA-98 / CGA009).